A 228-amino-acid chain; its full sequence is Mediator of RNA polymerase II transcription subunit 7-A (228 aa).

The protein belongs to the Mediator complex subunit 7 family. In terms of assembly, component of the Mediator complex.

The protein localises to the nucleus. Functionally, component of the Mediator complex, a coactivator involved in the regulated transcription of nearly all RNA polymerase II-dependent genes. Mediator functions as a bridge to convey information from gene-specific regulatory proteins to the basal RNA polymerase II transcription machinery. Mediator is recruited to promoters by direct interactions with regulatory proteins and serves as a scaffold for the assembly of a functional preinitiation complex with RNA polymerase II and the general transcription factors. This Xenopus laevis (African clawed frog) protein is Mediator of RNA polymerase II transcription subunit 7-A (med7-a).